The primary structure comprises 164 residues: I-Kappa-B like protein F1 (164 aa).

3 ANK repeats span residues 57–89 (HGRQ…NINA), 94–124 (TGNT…DLGA), and 128–157 (QQET…AYNN).

The protein belongs to the polydnaviridae I-Kappa-B-like protein family.

Suppresses the host immune response through NF-kappa-B inactivation. Possesses ankyrin repeat domains required for NF-kappa-B binding but lacks the regulatory regions required for dissociation from NF-kappa-B and degradation. Therefore, prevents host NF-kappa-B release and subsequent activation. This chain is I-Kappa-B like protein F1 (F2), found in Microplitis demolitor bracovirus (isolate Webb) (MdBV).